We begin with the raw amino-acid sequence, 485 residues long: 1-aminocyclopropane-1-carboxylate synthase 2 (485 aa).

Residues E55 and Y92 each contribute to the substrate site. K278 carries the post-translational modification N6-(pyridoxal phosphate)lysine. S460 carries the post-translational modification Phosphoserine.

Belongs to the class-I pyridoxal-phosphate-dependent aminotransferase family. In terms of assembly, homodimer and heterodimer. In vivo, the relevance of heterodimerization with other ACS enzymes is however unsure. Requires pyridoxal 5'-phosphate as cofactor. Phosphorylated on Ser 460; phosphorylation may regulate its turnover. In terms of processing, may be processed at its C-terminus.

It catalyses the reaction S-adenosyl-L-methionine = 1-aminocyclopropane-1-carboxylate + S-methyl-5'-thioadenosine + H(+). It functions in the pathway alkene biosynthesis; ethylene biosynthesis via S-adenosyl-L-methionine; ethylene from S-adenosyl-L-methionine: step 1/2. Its function is as follows. 1-aminocyclopropane-1-carboxylate synthase (ACS) enzymes catalyze the conversion of S-adenosyl-L-methionine (SAM) into 1-aminocyclopropane-1-carboxylate (ACC), a direct precursor of ethylene. This is 1-aminocyclopropane-1-carboxylate synthase 2 (ACS2) from Solanum lycopersicum (Tomato).